The primary structure comprises 492 residues: 5-taurinomethyluridine-[tRNA] synthase subunit GTPB3, mitochondrial (492 aa).

Residues 1–20 (MWRGLSALVTQAAWAPLRLC) constitute a mitochondrion transit peptide. 5,10-methylenetetrahydrofolate-binding residues include Arg-52, Glu-112, and Lys-152. The region spanning 249-416 (GANVVVTGPP…LLQALKTELA (168 aa)) is the TrmE-type G domain. GTP is bound by residues 256–263 (GPPNAGKS), 282–286 (GTTRD), 303–306 (DTAG), and 374–377 (NKSD). Asn-259 serves as a coordination point for K(+). 2 residues coordinate Mg(2+): Ser-263 and Thr-284. Residue Lys-492 participates in 5,10-methylenetetrahydrofolate binding.

The protein belongs to the TRAFAC class TrmE-Era-EngA-EngB-Septin-like GTPase superfamily. TrmE GTPase family. Homodimer; forms a dimer in the presence of potassium. Interacts with MTO1; forms the GTPBP3-MTO1 complex composed of homodimers of GTPBP3 and MTO1. Requires K(+) as cofactor. In terms of tissue distribution, ubiquitously expressed. Highly expressed in tissues with high metabolic rates including heart, liver and brain. Weakly expressed in skeletal muscle.

Its subcellular location is the mitochondrion. It catalyses the reaction GTP + H2O = GDP + phosphate + H(+). In terms of biological role, GTPase component of the GTPBP3-MTO1 complex that catalyzes the 5-taurinomethyluridine (taum(5)U) modification at the 34th wobble position (U34) of mitochondrial tRNAs (mt-tRNAs), which plays a role in mt-tRNA decoding and mitochondrial translation. Taum(5)U formation on mammalian mt-tRNA requires the presence of both GTPBP3-mediated GTPase activity and MTO1 catalytic activity. The sequence is that of 5-taurinomethyluridine-[tRNA] synthase subunit GTPB3, mitochondrial from Mus musculus (Mouse).